A 315-amino-acid polypeptide reads, in one-letter code: MNLNIRGIINYSLLPISGIFYLVSVFRKWLYRVNFFKVQKFKYPVIVVGNITVGGTGKTPIVIALAQYFKQQGKQVGIVSRGYGGAHHQGSLLVNKDTNVYLSGDEPLLIALQTDLPVMINKNRAKAVKDLINQCQVDLIISDDGLQHYKMDRDVEIVVIDGIKRFGNGFFLPLGPLRESITRLKSVDFVINNAGLCAGEFSVKLTLKMFVNVKTGEEKSLNYFKGKYCHGVAGIGHPERFFNALIRLGINLEHHIFADHYIYQQSDLVFEDNHPILMTAKDCVKCTQFENDQMWYLQVEADLSDDFLKKLDAKL.

Residue 52 to 59 (TVGGTGKT) coordinates ATP.

Belongs to the LpxK family.

The enzyme catalyses a lipid A disaccharide + ATP = a lipid IVA + ADP + H(+). It participates in glycolipid biosynthesis; lipid IV(A) biosynthesis; lipid IV(A) from (3R)-3-hydroxytetradecanoyl-[acyl-carrier-protein] and UDP-N-acetyl-alpha-D-glucosamine: step 6/6. Transfers the gamma-phosphate of ATP to the 4'-position of a tetraacyldisaccharide 1-phosphate intermediate (termed DS-1-P) to form tetraacyldisaccharide 1,4'-bis-phosphate (lipid IVA). The chain is Tetraacyldisaccharide 4'-kinase from Ruthia magnifica subsp. Calyptogena magnifica.